The following is a 467-amino-acid chain: DEAD-box ATP-dependent RNA helicase CshA (467 aa).

A Q motif motif is present at residues 2 to 30 (TTFQELGLSQEVMKAIERMGFEETTPIQA). The region spanning 33-203 (IPLSLQNKDV…ERFMNEPELV (171 aa)) is the Helicase ATP-binding domain. Residue 46-53 (AQTGTGKT) coordinates ATP. Positions 151–154 (DEAD) match the DEAD box motif. In terms of domain architecture, Helicase C-terminal spans 214-374 (NIQQYYLEVH…RMKPPTLDEA (161 aa)). A disordered region spans residues 428–467 (TTPVQLTEEPPLAVKREKKRGGRPDGSARSRTKKRRITAH). The segment covering 457-467 (SRTKKRRITAH) has biased composition (basic residues).

Belongs to the DEAD box helicase family. CshA subfamily. As to quaternary structure, oligomerizes, may be a member of the RNA degradosome.

Its subcellular location is the cytoplasm. The catalysed reaction is ATP + H2O = ADP + phosphate + H(+). Functionally, DEAD-box RNA helicase possibly involved in RNA degradation. Unwinds dsRNA in both 5'- and 3'-directions, has RNA-dependent ATPase activity. This is DEAD-box ATP-dependent RNA helicase CshA from Geobacillus kaustophilus (strain HTA426).